Here is a 156-residue protein sequence, read N- to C-terminus: uncharacterized protein (156 aa).

It to L.lactis TrpF C-terminal region.

This is an uncharacterized protein from Bacillus subtilis (strain 168).